Reading from the N-terminus, the 31-residue chain is Photosystem II reaction center protein T (31 aa).

Residues 3-23 (SVAYIIVLAMALSVLFFAIAF) form a helical membrane-spanning segment.

This sequence belongs to the PsbT family. As to quaternary structure, PSII is composed of 1 copy each of membrane proteins PsbA, PsbB, PsbC, PsbD, PsbE, PsbF, PsbH, PsbI, PsbJ, PsbK, PsbL, PsbM, PsbT, PsbX, PsbY, PsbZ, Psb30/Ycf12, peripheral proteins PsbO, CyanoQ (PsbQ), PsbU, PsbV and a large number of cofactors. It forms dimeric complexes.

The protein localises to the cellular thylakoid membrane. Its function is as follows. Found at the monomer-monomer interface of the photosystem II (PS II) dimer, plays a role in assembly and dimerization of PSII. PSII is a light-driven water plastoquinone oxidoreductase, using light energy to abstract electrons from H(2)O, generating a proton gradient subsequently used for ATP formation. The sequence is that of Photosystem II reaction center protein T from Picosynechococcus sp. (strain ATCC 27264 / PCC 7002 / PR-6) (Agmenellum quadruplicatum).